The following is a 168-amino-acid chain: uncharacterized protein (168 aa).

Positions 1-21 (MKLLKALAVLSLATISSHSFA) form a signal peptide, or 19.

This is an uncharacterized protein from Haemophilus influenzae (strain ATCC 51907 / DSM 11121 / KW20 / Rd).